The following is an 814-amino-acid chain: Pre-rRNA-processing protein TSR1 homolog (814 aa).

A disordered region spans residues 1 to 67 (MADHAFHRPG…NQMNQLRKNK (67 aa)). Residues 16–27 (NKAHKTGRHRSK) are compositionally biased toward basic residues. The 166-residue stretch at 84–249 (APFLVCLLPM…MRRIGGQKKR (166 aa)) folds into the Bms1-type G domain. 2 disordered regions span residues 316–357 (PYKL…DAEQ) and 392–448 (WIPD…EEFQ). A compositionally biased stretch (basic and acidic residues) spans 317–340 (YKLDKSRDGENSEVRLLDRSDPSK). A compositionally biased stretch (acidic residues) spans 395 to 426 (DVEEVEDPDGKDDDDMSEDDDDDKEDDNEDFM). A compositionally biased stretch (basic and acidic residues) spans 431 to 442 (KSFEDEYEKRDS). Residue T444 is modified to Phosphothreonine.

The protein belongs to the TRAFAC class translation factor GTPase superfamily. Bms1-like GTPase family. TSR1 subfamily.

The protein resides in the nucleus. It localises to the nucleolus. In terms of biological role, required during maturation of the 40S ribosomal subunit in the nucleolus. This chain is Pre-rRNA-processing protein TSR1 homolog, found in Drosophila melanogaster (Fruit fly).